The chain runs to 200 residues: Dephospho-CoA kinase (200 aa).

Residues 4-200 enclose the DPCK domain; that stretch reads VLALTGGIAT…QLLIKIKEEG (197 aa). Residue 12–17 coordinates ATP; that stretch reads ATGKST.

It belongs to the CoaE family.

The protein localises to the cytoplasm. The enzyme catalyses 3'-dephospho-CoA + ATP = ADP + CoA + H(+). The protein operates within cofactor biosynthesis; coenzyme A biosynthesis; CoA from (R)-pantothenate: step 5/5. Its function is as follows. Catalyzes the phosphorylation of the 3'-hydroxyl group of dephosphocoenzyme A to form coenzyme A. The sequence is that of Dephospho-CoA kinase from Lactobacillus acidophilus (strain ATCC 700396 / NCK56 / N2 / NCFM).